A 978-amino-acid chain; its full sequence is Mast/stem cell growth factor receptor Kit (978 aa).

A signal peptide spans 1–25 (MRGARGAWDFLFVLLLLLLVQTGSS). Over 26-525 (QPSVSPGELS…QIHAHTLFTP (500 aa)) the chain is Extracellular. 5 consecutive Ig-like C2-type domains span residues 27-112 (PSVS…VFVR), 121-205 (DLPL…LKVR), 212-309 (PVVS…LEVV), 318-411 (PMMN…VNVN), and 414-508 (PEIL…FNFA). Cysteines 58 and 97 form a disulfide. N-linked (GlcNAc...) asparagine glycosylation is found at asparagine 94, asparagine 130, and asparagine 145. Cystine bridges form between cysteine 136–cysteine 186, cysteine 151–cysteine 183, and cysteine 233–cysteine 291. Asparagine 284, asparagine 294, asparagine 301, asparagine 321, asparagine 353, asparagine 368, asparagine 401, asparagine 464, and asparagine 487 each carry an N-linked (GlcNAc...) asparagine glycan. Cysteine 429 and cysteine 492 form a disulfide bridge. A helical transmembrane segment spans residues 526–546 (LLIGFVIAAGLMCIFVMILTY). Residues 547-978 (KYLQKPMYEV…TQPLLVHEDV (432 aa)) are Cytoplasmic-facing. 2 positions are modified to phosphotyrosine: tyrosine 548 and tyrosine 554. Mg(2+) is bound at residue tyrosine 569. Residues tyrosine 569 and tyrosine 571 each carry the phosphotyrosine; by autocatalysis modification. Positions 569–571 (YVY) are important for interaction with phosphotyrosine-binding proteins. Residues 590–939 (LSFGKTLGAG…ISESTNHIYS (350 aa)) enclose the Protein kinase domain. ATP contacts are provided by residues 597–604 (GAGAFGKV), lysine 624, and 672–678 (EYCCYGD). Residues tyrosine 704 and tyrosine 722 each carry the phosphotyrosine; by autocatalysis modification. Residue tyrosine 731 is modified to Phosphotyrosine. Residues serine 743 and serine 748 each carry the phosphoserine; by PKC/PRKCA modification. The Proton acceptor role is filled by aspartate 794. Position 798 (arginine 798) interacts with ATP. Mg(2+) contacts are provided by asparagine 799 and aspartate 812. A Phosphoserine modification is found at serine 823. Phosphotyrosine; by autocatalysis is present on tyrosine 825. Serine 893 is subject to Phosphoserine. Tyrosine 902 is subject to Phosphotyrosine. A Phosphotyrosine; by autocatalysis modification is found at tyrosine 938. A Phosphoserine modification is found at serine 961.

It belongs to the protein kinase superfamily. Tyr protein kinase family. CSF-1/PDGF receptor subfamily. As to quaternary structure, monomer in the absence of bound KITLG/SCF. Homodimer in the presence of bound KITLG/SCF, forming a heterotetramer with two KITLG/SCF molecules. Interacts (via phosphorylated tyrosine residues) with the adapter proteins GRB2 and GRB7 (via SH2 domain), and SH2B2/APS. Interacts (via C-terminus) with MPDZ (via the tenth PDZ domain). Interacts (via phosphorylated tyrosine residues) with PIK3R1 and PIK3CD. Interacts (via phosphorylated tyrosine) with CRK (isoform Crk-II), FYN, SHC1 and MATK/CHK (via SH2 domain). Interacts with LYN and FES/FPS. Interacts (via phosphorylated tyrosine residues) with the protein phosphatases PTPN6/SHP-1 (via SH2 domain), PTPN11/SHP-2 (via SH2 domain) and PTPRU. Interacts with PLCG1. Interacts with DOK1 and TEC. Interacts with IL1RAP (independent of stimulation with KITLG/SCF). A mast cell-specific KITLG/SCF-induced interleukin-33 signaling complex contains IL1RL1, IL1RAP, KIT and MYD88. Post-translationally, ubiquitinated by SOCS6. KIT is rapidly ubiquitinated after autophosphorylation induced by KITLG/SCF binding, leading to internalization and degradation. Autophosphorylated on tyrosine residues. KITLG/SCF binding promotes autophosphorylation. Phosphorylated tyrosine residues are important for interaction with specific binding partners.

It is found in the cell membrane. It carries out the reaction L-tyrosyl-[protein] + ATP = O-phospho-L-tyrosyl-[protein] + ADP + H(+). Its activity is regulated as follows. Present in an inactive conformation in the absence of bound ligand. KITLG/SCF binding leads to dimerization and activation by autophosphorylation on tyrosine residues. Activity is down-regulated by PRKCA-mediated phosphorylation on serine residues. Its function is as follows. Tyrosine-protein kinase that acts as a cell-surface receptor for the cytokine KITLG/SCF and plays an essential role in the regulation of cell survival and proliferation, hematopoiesis, stem cell maintenance, gametogenesis, mast cell development, migration and function, and in melanogenesis. In response to KITLG/SCF binding, KIT can activate several signaling pathways. Phosphorylates PIK3R1, PLCG1, SH2B2/APS and CBL. Activates the AKT1 signaling pathway by phosphorylation of PIK3R1, the regulatory subunit of phosphatidylinositol 3-kinase. Activated KIT also transmits signals via GRB2 and activation of RAS, RAF1 and the MAP kinases MAPK1/ERK2 and/or MAPK3/ERK1. Promotes activation of STAT family members STAT1, STAT3, STAT5A and STAT5B. Activation of PLCG1 leads to the production of the cellular signaling molecules diacylglycerol and inositol 1,4,5-trisphosphate. KIT signaling is modulated by protein phosphatases, and by rapid internalization and degradation of the receptor. Activated KIT promotes phosphorylation of the protein phosphatases PTPN6/SHP-1 and PTPRU, and of the transcription factors STAT1, STAT3, STAT5A and STAT5B. Promotes phosphorylation of PIK3R1, CBL, CRK (isoform Crk-II), LYN, MAPK1/ERK2 and/or MAPK3/ERK1, PLCG1, SRC and SHC1. The sequence is that of Mast/stem cell growth factor receptor Kit (KIT) from Capra hircus (Goat).